A 243-amino-acid chain; its full sequence is Probable transcriptional regulatory protein LSEI_1022 (243 aa).

The interval 1–23 (MSGHSKWHNIQGRKNAQDSKRGK) is disordered.

It belongs to the TACO1 family.

The protein localises to the cytoplasm. The polypeptide is Probable transcriptional regulatory protein LSEI_1022 (Lacticaseibacillus paracasei (strain ATCC 334 / BCRC 17002 / CCUG 31169 / CIP 107868 / KCTC 3260 / NRRL B-441) (Lactobacillus paracasei)).